A 258-amino-acid chain; its full sequence is Type III pantothenate kinase (258 aa).

12 to 19 (DIGNTSIA) is an ATP binding site. Residues Y94 and 109-112 (GSDV) contribute to the substrate site. D111 acts as the Proton acceptor in catalysis. Position 132 (D132) interacts with K(+). T135 serves as a coordination point for ATP. Residue T187 coordinates substrate.

This sequence belongs to the type III pantothenate kinase family. Homodimer. NH4(+) serves as cofactor. Requires K(+) as cofactor.

Its subcellular location is the cytoplasm. It catalyses the reaction (R)-pantothenate + ATP = (R)-4'-phosphopantothenate + ADP + H(+). Its pathway is cofactor biosynthesis; coenzyme A biosynthesis; CoA from (R)-pantothenate: step 1/5. In terms of biological role, catalyzes the phosphorylation of pantothenate (Pan), the first step in CoA biosynthesis. In Borreliella afzelii (strain PKo) (Borrelia afzelii), this protein is Type III pantothenate kinase.